A 441-amino-acid polypeptide reads, in one-letter code: tRNA modification GTPase MnmE (441 aa).

(6S)-5-formyl-5,6,7,8-tetrahydrofolate-binding residues include Arg-21, Glu-79, and Lys-118. One can recognise a TrmE-type G domain in the interval Gly-214–Glu-367. GTP is bound by residues Asn-224–Ser-229, Ser-243–Thr-249, and Asp-268–Gly-271. Residues Ser-228 and Thr-249 each contribute to the Mg(2+) site. Lys-441 serves as a coordination point for (6S)-5-formyl-5,6,7,8-tetrahydrofolate.

It belongs to the TRAFAC class TrmE-Era-EngA-EngB-Septin-like GTPase superfamily. TrmE GTPase family. Homodimer. Heterotetramer of two MnmE and two MnmG subunits. Requires K(+) as cofactor.

It localises to the cytoplasm. In terms of biological role, exhibits a very high intrinsic GTPase hydrolysis rate. Involved in the addition of a carboxymethylaminomethyl (cmnm) group at the wobble position (U34) of certain tRNAs, forming tRNA-cmnm(5)s(2)U34. This is tRNA modification GTPase MnmE from Paramagnetospirillum magneticum (strain ATCC 700264 / AMB-1) (Magnetospirillum magneticum).